We begin with the raw amino-acid sequence, 547 residues long: Chaperonin GroEL (547 aa).

ATP-binding positions include 30 to 33, Lys51, 87 to 91, Gly415, and Asp495; these read TLGP and DGTTT.

It belongs to the chaperonin (HSP60) family. In terms of assembly, forms a cylinder of 14 subunits composed of two heptameric rings stacked back-to-back. Interacts with the co-chaperonin GroES.

The protein localises to the cytoplasm. The enzyme catalyses ATP + H2O + a folded polypeptide = ADP + phosphate + an unfolded polypeptide.. Functionally, together with its co-chaperonin GroES, plays an essential role in assisting protein folding. The GroEL-GroES system forms a nano-cage that allows encapsulation of the non-native substrate proteins and provides a physical environment optimized to promote and accelerate protein folding. This chain is Chaperonin GroEL, found in Shewanella pealeana (strain ATCC 700345 / ANG-SQ1).